Here is a 272-residue protein sequence, read N- to C-terminus: SKA complex subunit 1 homolog (272 aa).

Residues 48-75 (ALSSMELQVQSIKDRLREETEAIPKAKK) are a coiled coil.

It belongs to the SKA1 family.

This Arabidopsis thaliana (Mouse-ear cress) protein is SKA complex subunit 1 homolog.